The following is a 534-amino-acid chain: Zinc finger protein 397 (534 aa).

Phosphoserine is present on S31. The SCAN box domain occupies 50-132 (RQQFRKFCYQ…TLLEDLEREF (83 aa)). Residues K55, K171, K202, and K252 each participate in a glycyl lysine isopeptide (Lys-Gly) (interchain with G-Cter in SUMO2) cross-link. The tract at residues 197-242 (DISGEKSQRLSQEPSFGGFSEHKSSLEWQQGSAPGETLRRSPSQRA) is disordered. 9 consecutive C2H2-type zinc fingers follow at residues 285-307 (YRCD…QRIH), 313-335 (YKCN…QRIH), 341-363 (YECS…RKIH), 369-391 (CKCN…QRIH), 397-419 (YECN…QRIH), 425-447 (YECN…QRIH), 453-475 (YECN…QRIH), 481-503 (YQCN…QRIH), and 509-531 (YICS…QRVH).

This sequence belongs to the krueppel C2H2-type zinc-finger protein family.

It localises to the nucleus. Its function is as follows. DNA-dependent transcriptional repressor. In Bos taurus (Bovine), this protein is Zinc finger protein 397 (ZNF397).